Reading from the N-terminus, the 104-residue chain is Large ribosomal subunit protein eL42 (104 aa).

Belongs to the eukaryotic ribosomal protein eL42 family. Component of the large ribosomal subunit. Mature ribosomes consist of a small (40S) and a large (60S) subunit. The 40S subunit contains about 32 different proteins and 1 molecule of RNA (18S). The 60S subunit contains about 42 different proteins and 3 molecules of RNA (28S, 5.8S and 5S).

It localises to the cytoplasm. Functionally, component of the ribosome, a large ribonucleoprotein complex responsible for the synthesis of proteins in the cell. The small ribosomal subunit (SSU) binds messenger RNAs (mRNAs) and translates the encoded message by selecting cognate aminoacyl-transfer RNA (tRNA) molecules. The large subunit (LSU) contains the ribosomal catalytic site termed the peptidyl transferase center (PTC), which catalyzes the formation of peptide bonds, thereby polymerizing the amino acids delivered by tRNAs into a polypeptide chain. The nascent polypeptides leave the ribosome through a tunnel in the LSU and interact with protein factors that function in enzymatic processing, targeting, and the membrane insertion of nascent chains at the exit of the ribosomal tunnel. In Plasmodium falciparum (isolate 3D7), this protein is Large ribosomal subunit protein eL42.